A 617-amino-acid polypeptide reads, in one-letter code: Secretogranin-2 (617 aa).

Residues 1-27 form the signal peptide; sequence MAEAKTHWLGAALSLIPLIFLISGAEA. A propeptide spanning residues 28–30 is cleaved from the precursor; that stretch reads ASF. The segment at 123–147 is disordered; the sequence is NEPQSVPKENKPHALNSEKNFPIDM. Tyr151 bears the Sulfotyrosine mark. Phosphoserine occurs at positions 174, 268, 432, 532, 555, and 556. A disordered region spans residues 552 to 583; it reads NQGSSQETDKLAPVSKRFPVGPPKNDDTPNRQ.

It belongs to the chromogranin/secretogranin protein family. In terms of assembly, interacts with Secretogranin III/SCG3.

It is found in the secreted. Its function is as follows. Neuroendocrine protein of the granin family that regulates the biogenesis of secretory granules. This chain is Secretogranin-2 (SCG2), found in Macaca fascicularis (Crab-eating macaque).